A 409-amino-acid chain; its full sequence is Elongation factor Tu (409 aa).

Positions lysine 10–glutamate 214 constitute a tr-type G domain. The interval glycine 19 to threonine 26 is G1. Glycine 19 to threonine 26 is a binding site for GTP. Threonine 26 lines the Mg(2+) pocket. Residues glycine 60–asparagine 64 are G2. The tract at residues aspartate 81–glycine 84 is G3. Residues aspartate 81 to histidine 85 and asparagine 136 to aspartate 139 each bind GTP. The tract at residues asparagine 136–aspartate 139 is G4. A G5 region spans residues serine 174 to lysine 176.

Belongs to the TRAFAC class translation factor GTPase superfamily. Classic translation factor GTPase family. EF-Tu/EF-1A subfamily. In terms of assembly, monomer.

It localises to the cytoplasm. It catalyses the reaction GTP + H2O = GDP + phosphate + H(+). GTP hydrolase that promotes the GTP-dependent binding of aminoacyl-tRNA to the A-site of ribosomes during protein biosynthesis. This Microcystis aeruginosa (strain NIES-843 / IAM M-2473) protein is Elongation factor Tu.